We begin with the raw amino-acid sequence, 694 residues long: E3 ubiquitin-protein ligase SPL11 (694 aa).

The span at Met-1–Glu-12 shows a compositional bias: acidic residues. 2 disordered regions span residues Met-1–Ala-21 and Asn-343–Ser-363. The U-box domain occupies Thr-272–Glu-346. Residues Arg-350–Ser-363 show a composition bias toward polar residues. 6 ARM repeats span residues Asn-398–Ile-438, His-439–Val-479, Ile-480–Ile-520, Tyr-521–Ser-561, His-562–Ser-602, and Gly-603–Gln-650. Low complexity predominate over residues Gln-650–Pro-667. The tract at residues Gln-650–Val-694 is disordered.

Interacts with SPIN1 (via N-terminus). Highly expressed in leaf, at intermediate levels in shoot and weakly in root.

The protein localises to the nucleus. It is found in the cytoplasm. The catalysed reaction is S-ubiquitinyl-[E2 ubiquitin-conjugating enzyme]-L-cysteine + [acceptor protein]-L-lysine = [E2 ubiquitin-conjugating enzyme]-L-cysteine + N(6)-ubiquitinyl-[acceptor protein]-L-lysine.. It functions in the pathway protein modification; protein ubiquitination. In terms of biological role, E3 ubiquitin-protein ligase that negatively regulates programmed cell death and disease resistance. Participates in flowering time control by mediating ubiquitination and subsequent proteasomal degradation of SPIN1. The chain is E3 ubiquitin-protein ligase SPL11 (SPL11) from Oryza sativa subsp. japonica (Rice).